The primary structure comprises 280 residues: Vitamin B12-binding protein (280 aa).

An N-terminal signal peptide occupies residues 1–27 (MMPLGLFPLPRAAAVLLISLLTLPAQA). A Fe/B12 periplasmic-binding domain is found at 30–277 (RVISLSPSTT…QMASIPTPVA (248 aa)). Tyrosine 57 lines the cyanocob(III)alamin pocket. Cysteines 190 and 266 form a disulfide.

Belongs to the BtuF family. As to quaternary structure, the complex is composed of two ATP-binding proteins (BtuD), two transmembrane proteins (BtuC) and a solute-binding protein (BtuF).

The protein resides in the periplasm. Its function is as follows. Part of the ABC transporter complex BtuCDF involved in vitamin B12 import. Binds vitamin B12 and delivers it to the periplasmic surface of BtuC. The protein is Vitamin B12-binding protein of Yersinia pestis bv. Antiqua (strain Antiqua).